Reading from the N-terminus, the 528-residue chain is Na(+)/H(+) antiporter NhaB (528 aa).

The Cytoplasmic portion of the chain corresponds to 1 to 23 (MPISLGNAFIKNFLGKAPDWYKV). A helical membrane pass occupies residues 24 to 46 (AIIAFLIINPIVFFLINPFVAGW). The Periplasmic segment spans residues 47 to 95 (LLVAEFIFTLAMALKCYPLQPGGLLAIEAIAIGMTSPAQVKHELVANIE). Residues 96 to 118 (VLLLLVFMVAGIYFMKHLLLFIF) form a helical membrane-spanning segment. Residues 119–129 (TKILLGIRSKT) lie on the Cytoplasmic side of the membrane. The helical transmembrane segment at 130–163 (LLSLAFCFAAAFLSAFLDALTVIAVVISVAIGFY) threads the bilayer. Residues 164–239 (SIYHKVASGN…ADQAGWLFGE (76 aa)) lie on the Periplasmic side of the membrane. Residues 240–262 (FLIRMSPVTLPVFFCGLITCALV) form a helical membrane-spanning segment. Topologically, residues 263 to 297 (EKLKVFGYGAKLPNNVRQILVDFDNEERKTRTNQD) are cytoplasmic. The helical transmembrane segment at 298–317 (VAKLWVQGLIAVWLIVALAL) threads the bilayer. The Periplasmic segment spans residues 318–320 (HLA). Residues 321-340 (AVGLIGLSVIILATAFTGVI) traverse the membrane as a helical segment. The Cytoplasmic portion of the chain corresponds to 341-352 (EEHSMGKAFEEA). Residues 353 to 375 (LPFTALLAVFFSIVAVIIDQELF) form a helical membrane-spanning segment. At 376–389 (KPVIDAVLAVEDKG) the chain is on the periplasmic side. The chain crosses the membrane as a helical span at residues 390-412 (TQLALFYVANGLLSMVSDNVFVG). The Cytoplasmic segment spans residues 413 to 477 (TVYINEVKTA…PLIRLSYGRM (65 aa)). The chain crosses the membrane as a helical span at residues 478-500 (VIMALPYTIVLAIVGLMGIMFFL). The Periplasmic portion of the chain corresponds to 501-528 (EPATASFYDAGWILPHSGDLTPVVSGGH).

This sequence belongs to the NhaB Na(+)/H(+) (TC 2.A.34) antiporter family.

It localises to the cell inner membrane. It carries out the reaction 2 Na(+)(in) + 3 H(+)(out) = 2 Na(+)(out) + 3 H(+)(in). Na(+)/H(+) antiporter that extrudes sodium in exchange for external protons. The polypeptide is Na(+)/H(+) antiporter NhaB (Vibrio alginolyticus).